Reading from the N-terminus, the 433-residue chain is Glutamyl-tRNA reductase (433 aa).

Residues 49 to 52 (TCNR), S114, 119 to 121 (EPQ), and Q125 contribute to the substrate site. The Nucleophile role is filled by C50. 201-206 (GAGETI) lines the NADP(+) pocket.

It belongs to the glutamyl-tRNA reductase family. Homodimer.

The catalysed reaction is (S)-4-amino-5-oxopentanoate + tRNA(Glu) + NADP(+) = L-glutamyl-tRNA(Glu) + NADPH + H(+). The protein operates within porphyrin-containing compound metabolism; protoporphyrin-IX biosynthesis; 5-aminolevulinate from L-glutamyl-tRNA(Glu): step 1/2. In terms of biological role, catalyzes the NADPH-dependent reduction of glutamyl-tRNA(Glu) to glutamate 1-semialdehyde (GSA). This chain is Glutamyl-tRNA reductase, found in Histophilus somni (strain 129Pt) (Haemophilus somnus).